The sequence spans 849 residues: Thrombospondin type-1 domain-containing protein 1 (849 aa).

The signal sequence occupies residues 1–24 (MKQTLKDFSNLLLVVLCDYVLGEA). Residues 25 to 413 (EHLVLGEPGH…QPQAPVKSNN (389 aa)) lie on the Extracellular side of the membrane. Residues asparagine 39, asparagine 50, asparagine 55, asparagine 66, asparagine 77, asparagine 106, and asparagine 303 are each glycosylated (N-linked (GlcNAc...) asparagine). Residues 340 to 393 (IETWGLWQPWSQCSASCGDGVRERRRVCLTSSPSRPGCPGMSSETSPCSLEDCA) enclose the TSP type-1 domain. 3 disulfide bridges follow: cysteine 352-cysteine 387, cysteine 356-cysteine 392, and cysteine 367-cysteine 377. Residues 414-434 (VVTVTGISLCLFIIVATVLIT) form a helical membrane-spanning segment. Residues 435 to 849 (LWRKLGRAPK…STLSVEKLVI (415 aa)) lie on the Cytoplasmic side of the membrane. Serine 463 carries the phosphoserine modification. Disordered regions lie at residues 472–516 (SEPR…SESF), 595–799 (KSPF…KCQS), and 828–849 (GYFG…KLVI). A compositionally biased stretch (low complexity) spans 479–493 (SDAGDGPAGSPGDPG). The span at 636–651 (SQVRSHSRGSHFRRTA) shows a compositional bias: basic residues. The segment covering 652-666 (SFHEARQARPFRERS) has biased composition (basic and acidic residues). Residues 720 to 732 (SPLPKPHSLGPPP) are compositionally biased toward pro residues.

Part of a complex composed of THSD1, PTK2/FAK1, TLN1 and VCL. Interacts with TLN1.

It is found in the endosome membrane. The protein localises to the cell junction. Its subcellular location is the focal adhesion. In terms of biological role, is a positive regulator of nascent focal adhesion assembly, involved in the modulation of endothelial cell attachment to the extracellular matrix. The chain is Thrombospondin type-1 domain-containing protein 1 (THSD1) from Bos taurus (Bovine).